The primary structure comprises 277 residues: 3-methyl-2-oxobutanoate hydroxymethyltransferase (277 aa).

Mg(2+) is bound by residues aspartate 42 and aspartate 81. 3-methyl-2-oxobutanoate is bound by residues 42 to 43 (DS), aspartate 81, and lysine 110. A Mg(2+)-binding site is contributed by glutamate 112. The active-site Proton acceptor is glutamate 179.

This sequence belongs to the PanB family. In terms of assembly, homodecamer; pentamer of dimers. Requires Mg(2+) as cofactor.

It localises to the cytoplasm. It carries out the reaction 3-methyl-2-oxobutanoate + (6R)-5,10-methylene-5,6,7,8-tetrahydrofolate + H2O = 2-dehydropantoate + (6S)-5,6,7,8-tetrahydrofolate. It functions in the pathway cofactor biosynthesis; (R)-pantothenate biosynthesis; (R)-pantoate from 3-methyl-2-oxobutanoate: step 1/2. Catalyzes the reversible reaction in which hydroxymethyl group from 5,10-methylenetetrahydrofolate is transferred onto alpha-ketoisovalerate to form ketopantoate. The polypeptide is 3-methyl-2-oxobutanoate hydroxymethyltransferase (Anaplasma marginale (strain St. Maries)).